Here is a 151-residue protein sequence, read N- to C-terminus: Large ribosomal subunit protein uL13 (151 aa).

Belongs to the universal ribosomal protein uL13 family. Part of the 50S ribosomal subunit.

This protein is one of the early assembly proteins of the 50S ribosomal subunit, although it is not seen to bind rRNA by itself. It is important during the early stages of 50S assembly. The sequence is that of Large ribosomal subunit protein uL13 from Microchaete diplosiphon (Fremyella diplosiphon).